An 85-amino-acid chain; its full sequence is UPF0386 protein VF_0869 (85 aa).

This sequence belongs to the UPF0386 family.

In Aliivibrio fischeri (strain ATCC 700601 / ES114) (Vibrio fischeri), this protein is UPF0386 protein VF_0869.